Here is a 152-residue protein sequence, read N- to C-terminus: Endoribonuclease YbeY (152 aa).

H114, H118, and H124 together coordinate Zn(2+).

This sequence belongs to the endoribonuclease YbeY family. Requires Zn(2+) as cofactor.

It is found in the cytoplasm. Single strand-specific metallo-endoribonuclease involved in late-stage 70S ribosome quality control and in maturation of the 3' terminus of the 16S rRNA. This is Endoribonuclease YbeY from Coxiella burnetii (strain CbuK_Q154) (Coxiella burnetii (strain Q154)).